The chain runs to 337 residues: Glycerol-3-phosphate dehydrogenase [NAD(P)+] (337 aa).

NADPH is bound by residues W12 and K107. Sn-glycerol 3-phosphate contacts are provided by K107, G138, and T140. A142 is an NADPH binding site. Sn-glycerol 3-phosphate is bound by residues K193, D246, S256, R257, and N258. K193 (proton acceptor) is an active-site residue. NADPH is bound at residue R257. NADPH is bound by residues V282 and E284.

This sequence belongs to the NAD-dependent glycerol-3-phosphate dehydrogenase family.

The protein resides in the cytoplasm. It carries out the reaction sn-glycerol 3-phosphate + NAD(+) = dihydroxyacetone phosphate + NADH + H(+). It catalyses the reaction sn-glycerol 3-phosphate + NADP(+) = dihydroxyacetone phosphate + NADPH + H(+). The protein operates within membrane lipid metabolism; glycerophospholipid metabolism. Its function is as follows. Catalyzes the reduction of the glycolytic intermediate dihydroxyacetone phosphate (DHAP) to sn-glycerol 3-phosphate (G3P), the key precursor for phospholipid synthesis. The polypeptide is Glycerol-3-phosphate dehydrogenase [NAD(P)+] (Koribacter versatilis (strain Ellin345)).